Here is a 724-residue protein sequence, read N- to C-terminus: Probable dipeptidyl-peptidase 5 (724 aa).

The first 19 residues, methionine 1 to alanine 19, serve as a signal peptide directing secretion. N-linked (GlcNAc...) asparagine glycosylation is found at asparagine 76, asparagine 97, asparagine 154, asparagine 257, asparagine 383, and asparagine 453. Serine 563 (charge relay system) is an active-site residue. An N-linked (GlcNAc...) asparagine glycan is attached at asparagine 610. Residues aspartate 646 and histidine 678 each act as charge relay system in the active site.

Belongs to the peptidase S9C family.

Its subcellular location is the secreted. In terms of biological role, extracellular dipeptidyl-peptidase which removes N-terminal dipeptides sequentially from polypeptides having unsubstituted N-termini. The polypeptide is Probable dipeptidyl-peptidase 5 (dpp5) (Aspergillus clavatus (strain ATCC 1007 / CBS 513.65 / DSM 816 / NCTC 3887 / NRRL 1 / QM 1276 / 107)).